The primary structure comprises 842 residues: Glycogen phosphorylase, muscle form (842 aa).

At Ser-2 the chain carries N-acetylserine. Ser-15 carries the phosphoserine; by PHK; in form phosphorylase A modification. AMP contacts are provided by Asp-43 and Tyr-76. A phosphotyrosine mark is found at Tyr-204 and Tyr-227. 310-319 (RRFKSSKFGC) contributes to the AMP binding site. Ser-430 is subject to Phosphoserine. Residue Tyr-473 is modified to Phosphotyrosine. Lys-681 carries the post-translational modification N6-(pyridoxal phosphate)lysine. Ser-747 and Ser-748 each carry phosphoserine.

It belongs to the glycogen phosphorylase family. Homodimer. Homotetramer; to form the enzymatically active phosphorylase A. It depends on pyridoxal 5'-phosphate as a cofactor. In terms of processing, phosphorylation of Ser-15 converts phosphorylase B (unphosphorylated) to phosphorylase A.

The enzyme catalyses [(1-&gt;4)-alpha-D-glucosyl](n) + phosphate = [(1-&gt;4)-alpha-D-glucosyl](n-1) + alpha-D-glucose 1-phosphate. Its activity is regulated as follows. Allosterically regulated through the non-covalent binding of metabolites, being activated by AMP and inhibited by ATP, ADP, and glucose-6-phosphate. The activity is also controlled by post-translational modifications including phosphorylation. Allosteric enzyme that catalyzes the rate-limiting step in glycogen catabolism, the phosphorolytic cleavage of glycogen to produce glucose-1-phosphate, and plays a central role in maintaining cellular and organismal glucose homeostasis. The chain is Glycogen phosphorylase, muscle form from Bos taurus (Bovine).